Here is a 90-residue protein sequence, read N- to C-terminus: RNA-binding protein Hfq (90 aa).

The Sm domain occupies 9–68; that stretch reads DPFLNALRRERVPVSIYLVNGIKLQGQVESFDQFVILLKNTVSQMVYKHAISTVVPARPF. The interval 71 to 90 is disordered; it reads TGHQNAQGGYGPQDDVPSGE.

It belongs to the Hfq family. In terms of assembly, homohexamer.

Its function is as follows. RNA chaperone that binds small regulatory RNA (sRNAs) and mRNAs to facilitate mRNA translational regulation in response to envelope stress, environmental stress and changes in metabolite concentrations. Also binds with high specificity to tRNAs. This is RNA-binding protein Hfq from Shewanella putrefaciens (strain CN-32 / ATCC BAA-453).